Reading from the N-terminus, the 221-residue chain is Epididymal secretory glutathione peroxidase (221 aa).

Positions 1–21 (MTAWLGASYVLPILLVSFVQT) are cleaved as a signal peptide. Cys73 is an active-site residue.

This sequence belongs to the glutathione peroxidase family. Epididymis.

It is found in the secreted. It catalyses the reaction 2 glutathione + H2O2 = glutathione disulfide + 2 H2O. Protects cells and enzymes from oxidative damage, by catalyzing the reduction of hydrogen peroxide, lipid peroxides and organic hydroperoxide, by glutathione. May constitute a glutathione peroxidase-like protective system against peroxide damage in sperm membrane lipids. This is Epididymal secretory glutathione peroxidase (GPX5) from Canis lupus familiaris (Dog).